Here is a 398-residue protein sequence, read N- to C-terminus: 4-hydroxy-3-methylbut-2-enyl diphosphate reductase (398 aa).

Residue C66 participates in [4Fe-4S] cluster binding. H96 contributes to the (2E)-4-hydroxy-3-methylbut-2-enyl diphosphate binding site. H96 serves as a coordination point for dimethylallyl diphosphate. H96 contacts isopentenyl diphosphate. C157 is a [4Fe-4S] cluster binding site. H185 contacts (2E)-4-hydroxy-3-methylbut-2-enyl diphosphate. Dimethylallyl diphosphate is bound at residue H185. H185 contributes to the isopentenyl diphosphate binding site. E187 (proton donor) is an active-site residue. Residue T250 coordinates (2E)-4-hydroxy-3-methylbut-2-enyl diphosphate. C288 contributes to the [4Fe-4S] cluster binding site. Positions 317, 318, 319, and 380 each coordinate (2E)-4-hydroxy-3-methylbut-2-enyl diphosphate. Dimethylallyl diphosphate-binding residues include S317, S318, N319, and S380. Isopentenyl diphosphate contacts are provided by S317, S318, N319, and S380.

It belongs to the IspH family. It depends on [4Fe-4S] cluster as a cofactor.

It catalyses the reaction isopentenyl diphosphate + 2 oxidized [2Fe-2S]-[ferredoxin] + H2O = (2E)-4-hydroxy-3-methylbut-2-enyl diphosphate + 2 reduced [2Fe-2S]-[ferredoxin] + 2 H(+). It carries out the reaction dimethylallyl diphosphate + 2 oxidized [2Fe-2S]-[ferredoxin] + H2O = (2E)-4-hydroxy-3-methylbut-2-enyl diphosphate + 2 reduced [2Fe-2S]-[ferredoxin] + 2 H(+). It functions in the pathway isoprenoid biosynthesis; dimethylallyl diphosphate biosynthesis; dimethylallyl diphosphate from (2E)-4-hydroxy-3-methylbutenyl diphosphate: step 1/1. Its pathway is isoprenoid biosynthesis; isopentenyl diphosphate biosynthesis via DXP pathway; isopentenyl diphosphate from 1-deoxy-D-xylulose 5-phosphate: step 6/6. Catalyzes the conversion of 1-hydroxy-2-methyl-2-(E)-butenyl 4-diphosphate (HMBPP) into a mixture of isopentenyl diphosphate (IPP) and dimethylallyl diphosphate (DMAPP). Acts in the terminal step of the DOXP/MEP pathway for isoprenoid precursor biosynthesis. This Prochlorococcus marinus subsp. pastoris (strain CCMP1986 / NIES-2087 / MED4) protein is 4-hydroxy-3-methylbut-2-enyl diphosphate reductase.